The sequence spans 411 residues: Serine--tRNA ligase (411 aa).

226–228 (TSE) serves as a coordination point for L-serine. 257-259 (RKE) is an ATP binding site. Residue E280 participates in L-serine binding. 344–347 (EISS) provides a ligand contact to ATP. S379 is a binding site for L-serine.

This sequence belongs to the class-II aminoacyl-tRNA synthetase family. Type-1 seryl-tRNA synthetase subfamily. As to quaternary structure, homodimer. The tRNA molecule binds across the dimer.

The protein resides in the cytoplasm. The enzyme catalyses tRNA(Ser) + L-serine + ATP = L-seryl-tRNA(Ser) + AMP + diphosphate + H(+). It catalyses the reaction tRNA(Sec) + L-serine + ATP = L-seryl-tRNA(Sec) + AMP + diphosphate + H(+). The protein operates within aminoacyl-tRNA biosynthesis; selenocysteinyl-tRNA(Sec) biosynthesis; L-seryl-tRNA(Sec) from L-serine and tRNA(Sec): step 1/1. Catalyzes the attachment of serine to tRNA(Ser). Is also able to aminoacylate tRNA(Sec) with serine, to form the misacylated tRNA L-seryl-tRNA(Sec), which will be further converted into selenocysteinyl-tRNA(Sec). The protein is Serine--tRNA ligase of Campylobacter jejuni subsp. doylei (strain ATCC BAA-1458 / RM4099 / 269.97).